Reading from the N-terminus, the 65-residue chain is Large ribosomal subunit protein bL35 (65 aa).

The interval 1-40 (MPKMKTNSGSKKRFALTGTGKIKRKHAFHSHILTKKSKKR) is disordered. A compositionally biased stretch (basic residues) spans 21–40 (KIKRKHAFHSHILTKKSKKR).

It belongs to the bacterial ribosomal protein bL35 family.

In Bacteroides fragilis (strain ATCC 25285 / DSM 2151 / CCUG 4856 / JCM 11019 / LMG 10263 / NCTC 9343 / Onslow / VPI 2553 / EN-2), this protein is Large ribosomal subunit protein bL35.